We begin with the raw amino-acid sequence, 138 residues long: Small ribosomal subunit protein bS6 (138 aa).

The disordered stretch occupies residues 100 to 138; the sequence is SPLAKGREEDDSDSSARRARDDSDDDGDDDEDDRRASAD. Over residues 121–131 the composition is skewed to acidic residues; it reads DSDDDGDDDED.

Belongs to the bacterial ribosomal protein bS6 family.

Functionally, binds together with bS18 to 16S ribosomal RNA. This is Small ribosomal subunit protein bS6 from Thioalkalivibrio sulfidiphilus (strain HL-EbGR7).